We begin with the raw amino-acid sequence, 580 residues long: 2-succinyl-5-enolpyruvyl-6-hydroxy-3-cyclohexene-1-carboxylate synthase (580 aa).

This sequence belongs to the TPP enzyme family. MenD subfamily. As to quaternary structure, homodimer. Mg(2+) is required as a cofactor. Requires Mn(2+) as cofactor. It depends on thiamine diphosphate as a cofactor.

It catalyses the reaction isochorismate + 2-oxoglutarate + H(+) = 5-enolpyruvoyl-6-hydroxy-2-succinyl-cyclohex-3-ene-1-carboxylate + CO2. It functions in the pathway quinol/quinone metabolism; 1,4-dihydroxy-2-naphthoate biosynthesis; 1,4-dihydroxy-2-naphthoate from chorismate: step 2/7. It participates in quinol/quinone metabolism; menaquinone biosynthesis. Catalyzes the thiamine diphosphate-dependent decarboxylation of 2-oxoglutarate and the subsequent addition of the resulting succinic semialdehyde-thiamine pyrophosphate anion to isochorismate to yield 2-succinyl-5-enolpyruvyl-6-hydroxy-3-cyclohexene-1-carboxylate (SEPHCHC). The sequence is that of 2-succinyl-5-enolpyruvyl-6-hydroxy-3-cyclohexene-1-carboxylate synthase from Listeria monocytogenes serovar 1/2a (strain ATCC BAA-679 / EGD-e).